A 413-amino-acid chain; its full sequence is Sensor protein SphS (413 aa).

Residues 176–398 enclose the Histidine kinase domain; it reads DVAHELKTPL…WLRVQLPQEP (223 aa). A Phosphohistidine; by autocatalysis modification is found at His179.

It is found in the cytoplasm. It catalyses the reaction ATP + protein L-histidine = ADP + protein N-phospho-L-histidine.. Functionally, member of the two-component regulatory system SphR/SphS. Sensory kinase. Is involved in inducible production of alkaline phosphatase in response to phosphate limitation as it is directly involved in the regulation of phoA transcription in response to phosphate limitation. SphS functions as a protein kinase that phosphorylates SphR. The protein is Sensor protein SphS (sphS) of Synechococcus elongatus (strain ATCC 33912 / PCC 7942 / FACHB-805) (Anacystis nidulans R2).